Reading from the N-terminus, the 365-residue chain is Histidinol-phosphate aminotransferase (365 aa).

Positions M1–V23 are disordered. An N6-(pyridoxal phosphate)lysine modification is found at K221.

This sequence belongs to the class-II pyridoxal-phosphate-dependent aminotransferase family. Histidinol-phosphate aminotransferase subfamily. In terms of assembly, homodimer. Requires pyridoxal 5'-phosphate as cofactor.

It catalyses the reaction L-histidinol phosphate + 2-oxoglutarate = 3-(imidazol-4-yl)-2-oxopropyl phosphate + L-glutamate. Its pathway is amino-acid biosynthesis; L-histidine biosynthesis; L-histidine from 5-phospho-alpha-D-ribose 1-diphosphate: step 7/9. The polypeptide is Histidinol-phosphate aminotransferase (Rhodopseudomonas palustris (strain BisB18)).